We begin with the raw amino-acid sequence, 56 residues long: Small ribosomal subunit protein uS14 (56 aa).

The Zn(2+) site is built by Cys21, Cys24, Cys39, and Cys42.

It belongs to the universal ribosomal protein uS14 family. As to quaternary structure, component of the 40S small ribosomal subunit. The cofactor is Zn(2+).

It localises to the cytoplasm. Its subcellular location is the cytosol. It is found in the rough endoplasmic reticulum. This Drosophila melanogaster (Fruit fly) protein is Small ribosomal subunit protein uS14 (RpS29).